The sequence spans 350 residues: Type II restriction enzyme NgoBI (350 aa).

It catalyses the reaction Endonucleolytic cleavage of DNA to give specific double-stranded fragments with terminal 5'-phosphates.. Functionally, a P subtype restriction enzyme that recognizes the double-stranded sequence 5'-RGCGCY-3'; the cleavage site is unknown. The sequence is that of Type II restriction enzyme NgoBI (ngoBIR) from Neisseria gonorrhoeae.